The primary structure comprises 90 residues: Elongation factor 1-beta (90 aa).

This sequence belongs to the EF-1-beta/EF-1-delta family.

In terms of biological role, promotes the exchange of GDP for GTP in EF-1-alpha/GDP, thus allowing the regeneration of EF-1-alpha/GTP that could then be used to form the ternary complex EF-1-alpha/GTP/AAtRNA. This Sulfolobus acidocaldarius (strain ATCC 33909 / DSM 639 / JCM 8929 / NBRC 15157 / NCIMB 11770) protein is Elongation factor 1-beta.